Consider the following 925-residue polypeptide: Ubp5-interacting protein ftp105 (925 aa).

Over residues 650-664 (EGSSDFESKSSDNTS) the composition is skewed to low complexity. Residues 650 to 671 (EGSSDFESKSSDNTSLDGTPLQ) are disordered.

Belongs to the hid-1 family. Interacts with ubp5.

It localises to the cytoplasm. The protein localises to the golgi apparatus. Its function is as follows. Required for the localization of ubp5 to the Golgi apparatus. Involved in detoxification of cadmium ion. This Schizosaccharomyces pombe (strain 972 / ATCC 24843) (Fission yeast) protein is Ubp5-interacting protein ftp105 (ftp105).